We begin with the raw amino-acid sequence, 503 residues long: Lanosterol 14-alpha demethylase (503 aa).

A helical membrane pass occupies residues 24-44 (GNLLSTLLIACAFTLSLVYLF). Residue Cys449 participates in heme binding.

It belongs to the cytochrome P450 family. It depends on heme as a cofactor. In terms of processing, ubiquitinated by MARCHF6, leading to proteasomal degradation.

It localises to the endoplasmic reticulum membrane. It is found in the microsome membrane. The enzyme catalyses a 14alpha-methyl steroid + 3 reduced [NADPH--hemoprotein reductase] + 3 O2 = a Delta(14) steroid + formate + 3 oxidized [NADPH--hemoprotein reductase] + 4 H2O + 4 H(+). It catalyses the reaction lanosterol + 3 reduced [NADPH--hemoprotein reductase] + 3 O2 = 4,4-dimethyl-5alpha-cholesta-8,14,24-trien-3beta-ol + formate + 3 oxidized [NADPH--hemoprotein reductase] + 4 H2O + 4 H(+). It carries out the reaction 24,25-dihydrolanosterol + 3 reduced [NADPH--hemoprotein reductase] + 3 O2 = 4,4-dimethyl-8,14-cholestadien-3beta-ol + formate + 3 oxidized [NADPH--hemoprotein reductase] + 4 H2O + 4 H(+). The catalysed reaction is a 14alpha-methyl steroid + reduced [NADPH--hemoprotein reductase] + O2 = a 14alpha-hydroxymethyl steroid + oxidized [NADPH--hemoprotein reductase] + H2O + H(+). The enzyme catalyses a 14alpha-hydroxymethyl steroid + reduced [NADPH--hemoprotein reductase] + O2 = a 14alpha-formyl steroid + oxidized [NADPH--hemoprotein reductase] + 2 H2O + H(+). It catalyses the reaction a 14alpha-formyl steroid + reduced [NADPH--hemoprotein reductase] + O2 = a Delta(14) steroid + formate + oxidized [NADPH--hemoprotein reductase] + H2O + 2 H(+). It carries out the reaction lanosterol + reduced [NADPH--hemoprotein reductase] + O2 = 32-hydroxylanosterol + oxidized [NADPH--hemoprotein reductase] + H2O + H(+). The catalysed reaction is 32-hydroxylanosterol + reduced [NADPH--hemoprotein reductase] + O2 = 32-oxolanosterol + oxidized [NADPH--hemoprotein reductase] + 2 H2O + H(+). The enzyme catalyses 32-oxolanosterol + reduced [NADPH--hemoprotein reductase] + O2 = 4,4-dimethyl-5alpha-cholesta-8,14,24-trien-3beta-ol + formate + oxidized [NADPH--hemoprotein reductase] + H2O + 2 H(+). It catalyses the reaction 24,25-dihydrolanosterol + reduced [NADPH--hemoprotein reductase] + O2 = 32-hydroxy-24,25-dihydrolanosterol + oxidized [NADPH--hemoprotein reductase] + H2O + H(+). It carries out the reaction 32-hydroxy-24,25-dihydrolanosterol + reduced [NADPH--hemoprotein reductase] + O2 = 32-oxo-24,25-dihydrolanosterol + oxidized [NADPH--hemoprotein reductase] + 2 H2O + H(+). The catalysed reaction is 32-oxo-24,25-dihydrolanosterol + reduced [NADPH--hemoprotein reductase] + O2 = 4,4-dimethyl-8,14-cholestadien-3beta-ol + formate + oxidized [NADPH--hemoprotein reductase] + H2O + 2 H(+). It participates in steroid biosynthesis; zymosterol biosynthesis; zymosterol from lanosterol: step 1/6. Its activity is regulated as follows. Inhibited by azalanstat. Inhibited by azole antifungal agents ketoconazole, itraconazole and fluconazole. Sterol 14alpha-demethylase that plays a critical role in the cholesterol biosynthesis pathway, being cholesterol the major sterol component in mammalian membranes as well as a precursor for bile acid and steroid hormone synthesis. Cytochrome P450 monooxygenase that catalyzes the three-step oxidative removal of the 14alpha-methyl group (C-32) of sterols such as lanosterol (lanosta-8,24-dien-3beta-ol) and 24,25-dihydrolanosterol (DHL) in the form of formate, and converts the sterols to 4,4-dimethyl-5alpha-cholesta-8,14,24-trien-3beta-ol and 4,4-dimethyl-8,14-cholestadien-3beta-ol, respectively, which are intermediates of cholesterol biosynthesis. Can also demethylate substrates not intrinsic to mammals, such as eburicol (24-methylene-24,25-dihydrolanosterol), but at a lower rate than DHL. This Rattus norvegicus (Rat) protein is Lanosterol 14-alpha demethylase.